Reading from the N-terminus, the 180-residue chain is Large ribosomal subunit protein uL5 (180 aa).

The protein belongs to the universal ribosomal protein uL5 family. In terms of assembly, part of the 50S ribosomal subunit; part of the 5S rRNA/L5/L18/L25 subcomplex. Contacts the 5S rRNA and the P site tRNA. Forms a bridge to the 30S subunit in the 70S ribosome.

This is one of the proteins that bind and probably mediate the attachment of the 5S RNA into the large ribosomal subunit, where it forms part of the central protuberance. In the 70S ribosome it contacts protein S13 of the 30S subunit (bridge B1b), connecting the 2 subunits; this bridge is implicated in subunit movement. Contacts the P site tRNA; the 5S rRNA and some of its associated proteins might help stabilize positioning of ribosome-bound tRNAs. This Streptococcus suis (strain 05ZYH33) protein is Large ribosomal subunit protein uL5.